The primary structure comprises 150 residues: MSDGFEQKEQKPFNTGREETIMEETKQVGKGILYGLIAIFSAMLLTSLAVSLLLTATSLEESSFNWLITAISFLSLFIGGFISGGKGKERGWMIGALTALSFSLIILLFQYLGFGKTFTAEQLIFHLGFLGVCMLGGIFGVNMRGNRSST.

Helical transmembrane passes span Ile32–Leu52, Phe64–Gly84, Ile94–Phe114, and Leu123–Met143.

Its subcellular location is the cell membrane. This is an uncharacterized protein from Bacillus subtilis (strain 168).